We begin with the raw amino-acid sequence, 122 residues long: High-potential iron-sulfur protein (122 aa).

Positions 1 to 37 (MSDKPISKSRRDAVKVMLGTAAAIPMINLVGFGTARA) are cleaved as a signal peptide. [4Fe-4S] cluster contacts are provided by Cys80, Cys83, Cys100, and Cys114.

It belongs to the high-potential iron-sulfur protein (HiPIP) family. Homodimer.

Its subcellular location is the periplasm. Functionally, specific class of high-redox-potential 4Fe-4S ferredoxins. Functions in anaerobic electron transport in most purple and in some other photosynthetic bacteria and in at least one genus (Paracoccus) of halophilic, denitrifying bacteria. The sequence is that of High-potential iron-sulfur protein (hip) from Allochromatium vinosum (strain ATCC 17899 / DSM 180 / NBRC 103801 / NCIMB 10441 / D) (Chromatium vinosum).